Consider the following 319-residue polypeptide: Chromoplast-specific carotenoid-associated protein C1, chromoplastic (319 aa).

The transit peptide at 1 to 55 (MTSIAFWNAFTVNPFPAAARRSPPPLTPFTSGALSPARKPRILEISHPRTLPSFR) directs the protein to the chromoplast.

It belongs to the PAP/fibrillin family. Expressed in flower buds and floral lip tissues. Not detected in roots and leaves. Specifically expressed in conical papillate cells of adaxial epidermis of lip tissues.

The protein resides in the plastid. It is found in the chromoplast. May be involved in carotenoid sequestration within chromoplasts. This chain is Chromoplast-specific carotenoid-associated protein C1, chromoplastic (CHRC1), found in Oncidium hybrid cultivar (Orchid).